A 477-amino-acid polypeptide reads, in one-letter code: Probable periplasmic serine endoprotease DegP-like (477 aa).

Residues 1 to 27 form the signal peptide; it reads MSIPRLKSYLTMFAAVLMLGQVLTAQA. Catalysis depends on charge relay system residues His117, Asp147, and Ser220. Substrate-binding positions include 218 to 220 and 275 to 279; these read GNS and LGVVI. PDZ domains follow at residues 264–355 and 361–466; these read LKKD…IRNG and DISV…LRQG.

This sequence belongs to the peptidase S1C family.

The protein localises to the periplasm. It carries out the reaction Acts on substrates that are at least partially unfolded. The cleavage site P1 residue is normally between a pair of hydrophobic residues, such as Val-|-Val.. Might be efficient in the degradation of transiently denatured and unfolded proteins which accumulate in the periplasm following stress conditions. The chain is Probable periplasmic serine endoprotease DegP-like from Pseudomonas putida (strain GB-1).